A 407-amino-acid chain; its full sequence is Protein RecA (407 aa).

79–86 (GPESSGKT) provides a ligand contact to ATP. The tract at residues 358–407 (LSLEASPEESDAKTLRRXASRGAGASSSRVQEGSAANDHFQDESTTAKLL) is disordered. Low complexity predominate over residues 377–386 (SRGAGASSSR).

Belongs to the RecA family.

It localises to the cytoplasm. In terms of biological role, can catalyze the hydrolysis of ATP in the presence of single-stranded DNA, the ATP-dependent uptake of single-stranded DNA by duplex DNA, and the ATP-dependent hybridization of homologous single-stranded DNAs. It interacts with LexA causing its activation and leading to its autocatalytic cleavage. This chain is Protein RecA, found in Treponema pallidum (strain Nichols).